The primary structure comprises 1068 residues: Carbamoyl phosphate synthase large chain (1068 aa).

The tract at residues 1–403 (MPKRTDINTI…SLQKALRGLE (403 aa)) is carboxyphosphate synthetic domain. The ATP site is built by arginine 129, arginine 169, glycine 175, glycine 176, glutamine 208, valine 210, glutamate 215, glycine 241, valine 242, histidine 243, glutamine 285, and glutamate 299. One can recognise an ATP-grasp 1 domain in the interval 133–328 (KEAMEKIGLS…IAKVAAKLAV (196 aa)). Mg(2+)-binding residues include glutamine 285, glutamate 299, and asparagine 301. Mn(2+) is bound by residues glutamine 285, glutamate 299, and asparagine 301. An oligomerization domain region spans residues 404 to 548 (TGICGFNLMS…YSTYEEECES (145 aa)). The segment at 549 to 930 (RPSDKKKIMI…AFLKAQLGAN (382 aa)) is carbamoyl phosphate synthetic domain. One can recognise an ATP-grasp 2 domain in the interval 673-864 (QQILHKLHLK…LAKIAARVMA (192 aa)). ATP-binding residues include arginine 709, histidine 748, leucine 750, glutamate 755, glycine 780, isoleucine 781, histidine 782, serine 783, glutamine 823, and glutamate 835. Residues glutamine 823, glutamate 835, and asparagine 837 each contribute to the Mg(2+) site. 3 residues coordinate Mn(2+): glutamine 823, glutamate 835, and asparagine 837. Positions 931–1068 (ERIPKTGKVF…SLQDLHQRLL (138 aa)) constitute an MGS-like domain. Positions 931–1068 (ERIPKTGKVF…SLQDLHQRLL (138 aa)) are allosteric domain.

Belongs to the CarB family. As to quaternary structure, composed of two chains; the small (or glutamine) chain promotes the hydrolysis of glutamine to ammonia, which is used by the large (or ammonia) chain to synthesize carbamoyl phosphate. Tetramer of heterodimers (alpha,beta)4. Mg(2+) is required as a cofactor. It depends on Mn(2+) as a cofactor.

It carries out the reaction hydrogencarbonate + L-glutamine + 2 ATP + H2O = carbamoyl phosphate + L-glutamate + 2 ADP + phosphate + 2 H(+). The catalysed reaction is hydrogencarbonate + NH4(+) + 2 ATP = carbamoyl phosphate + 2 ADP + phosphate + 2 H(+). The protein operates within amino-acid biosynthesis; L-arginine biosynthesis; carbamoyl phosphate from bicarbonate: step 1/1. It functions in the pathway pyrimidine metabolism; UMP biosynthesis via de novo pathway; (S)-dihydroorotate from bicarbonate: step 1/3. Large subunit of the glutamine-dependent carbamoyl phosphate synthetase (CPSase). CPSase catalyzes the formation of carbamoyl phosphate from the ammonia moiety of glutamine, carbonate, and phosphate donated by ATP, constituting the first step of 2 biosynthetic pathways, one leading to arginine and/or urea and the other to pyrimidine nucleotides. The large subunit (synthetase) binds the substrates ammonia (free or transferred from glutamine from the small subunit), hydrogencarbonate and ATP and carries out an ATP-coupled ligase reaction, activating hydrogencarbonate by forming carboxy phosphate which reacts with ammonia to form carbamoyl phosphate. The polypeptide is Carbamoyl phosphate synthase large chain (Pasteurella multocida (strain Pm70)).